Consider the following 294-residue polypeptide: Nucleotide-binding protein LCA_0526 (294 aa).

12-19 lines the ATP pocket; that stretch reads GMSGAGKT. Residue 62 to 65 coordinates GTP; that stretch reads DLRS.

This sequence belongs to the RapZ-like family.

In terms of biological role, displays ATPase and GTPase activities. This chain is Nucleotide-binding protein LCA_0526, found in Latilactobacillus sakei subsp. sakei (strain 23K) (Lactobacillus sakei subsp. sakei).